The primary structure comprises 381 residues: Diguanylate cyclase DosC (381 aa).

Heme is bound at residue His98. The GGDEF domain maps to 325-381 (TPLSVLIIDVDKFKEINDTWGHNTGDEILRKVSFLSQKRLVKSKILGAGSSRKLAVS). Asp333 provides a ligand contact to Mg(2+). Positions 341 and 350 each coordinate substrate.

It depends on heme as a cofactor. Mg(2+) serves as cofactor.

The catalysed reaction is 2 GTP = 3',3'-c-di-GMP + 2 diphosphate. Its pathway is purine metabolism; 3',5'-cyclic di-GMP biosynthesis. Globin-coupled heme-based oxygen sensor protein displaying diguanylate cyclase (DGC) activity in response to oxygen availability. Thus, catalyzes the synthesis of cyclic diguanylate (c-di-GMP) via the condensation of 2 GTP molecules. Cyclic-di-GMP is a second messenger which controls cell surface-associated traits in bacteria. The polypeptide is Diguanylate cyclase DosC (dosC) (Shigella flexneri serotype 5b (strain 8401)).